A 596-amino-acid polypeptide reads, in one-letter code: ATP-binding protein Uup (596 aa).

ABC transporter domains lie at 1–222 (MSLI…RIEK) and 290–516 (FKLD…SKIN). Residues 36–43 (GKNGAGKS) and 322–329 (GDNGCGKS) contribute to the ATP site. Positions 519–596 (IKIKNNFKKE…LEKNIINTKI (78 aa)) are C-terminal domain (CTD), binds DNA.

Belongs to the ABC transporter superfamily. ABCF family. Uup subfamily.

The protein localises to the cytoplasm. It carries out the reaction ATP + H2O = ADP + phosphate + H(+). Probably plays a role in ribosome assembly or function. May be involved in resolution of branched DNA intermediates that result from template switching in postreplication gaps. Binds DNA and has ATPase activity. This is ATP-binding protein Uup from Buchnera aphidicola subsp. Acyrthosiphon pisum (strain APS) (Acyrthosiphon pisum symbiotic bacterium).